A 336-amino-acid polypeptide reads, in one-letter code: Holliday junction branch migration complex subunit RuvB (336 aa).

Residues 4–184 (ADRLISAGTT…FGIVQRLEFY (181 aa)) are large ATPase domain (RuvB-L). Residues I23, R24, G65, K68, T69, T70, 131-133 (EDY), R174, Y184, and R221 contribute to the ATP site. Residue T69 participates in Mg(2+) binding. The interval 185-255 (QVPDLQYIVS…IAAQALDMLN (71 aa)) is small ATPAse domain (RuvB-S). Residues 258–336 (AEGFDYMDRK…HFGITPPEMP (79 aa)) form a head domain (RuvB-H) region. DNA-binding residues include R294, R313, and R318.

It belongs to the RuvB family. As to quaternary structure, homohexamer. Forms an RuvA(8)-RuvB(12)-Holliday junction (HJ) complex. HJ DNA is sandwiched between 2 RuvA tetramers; dsDNA enters through RuvA and exits via RuvB. An RuvB hexamer assembles on each DNA strand where it exits the tetramer. Each RuvB hexamer is contacted by two RuvA subunits (via domain III) on 2 adjacent RuvB subunits; this complex drives branch migration. In the full resolvosome a probable DNA-RuvA(4)-RuvB(12)-RuvC(2) complex forms which resolves the HJ.

The protein localises to the cytoplasm. The catalysed reaction is ATP + H2O = ADP + phosphate + H(+). Its function is as follows. The RuvA-RuvB-RuvC complex processes Holliday junction (HJ) DNA during genetic recombination and DNA repair, while the RuvA-RuvB complex plays an important role in the rescue of blocked DNA replication forks via replication fork reversal (RFR). RuvA specifically binds to HJ cruciform DNA, conferring on it an open structure. The RuvB hexamer acts as an ATP-dependent pump, pulling dsDNA into and through the RuvAB complex. RuvB forms 2 homohexamers on either side of HJ DNA bound by 1 or 2 RuvA tetramers; 4 subunits per hexamer contact DNA at a time. Coordinated motions by a converter formed by DNA-disengaged RuvB subunits stimulates ATP hydrolysis and nucleotide exchange. Immobilization of the converter enables RuvB to convert the ATP-contained energy into a lever motion, pulling 2 nucleotides of DNA out of the RuvA tetramer per ATP hydrolyzed, thus driving DNA branch migration. The RuvB motors rotate together with the DNA substrate, which together with the progressing nucleotide cycle form the mechanistic basis for DNA recombination by continuous HJ branch migration. Branch migration allows RuvC to scan DNA until it finds its consensus sequence, where it cleaves and resolves cruciform DNA. This Shigella boydii serotype 18 (strain CDC 3083-94 / BS512) protein is Holliday junction branch migration complex subunit RuvB.